Reading from the N-terminus, the 242-residue chain is Glucosamine-6-phosphate deaminase (242 aa).

Residue D67 is the Proton acceptor; for enolization step of the active site. The active-site For ring-opening step is the N136. Catalysis depends on H138, which acts as the Proton acceptor; for ring-opening step. E143 serves as the catalytic For ring-opening step.

The protein belongs to the glucosamine/galactosamine-6-phosphate isomerase family. NagB subfamily.

The enzyme catalyses alpha-D-glucosamine 6-phosphate + H2O = beta-D-fructose 6-phosphate + NH4(+). The protein operates within amino-sugar metabolism; N-acetylneuraminate degradation; D-fructose 6-phosphate from N-acetylneuraminate: step 5/5. In terms of biological role, catalyzes the reversible isomerization-deamination of glucosamine 6-phosphate (GlcN6P) to form fructose 6-phosphate (Fru6P) and ammonium ion. This is Glucosamine-6-phosphate deaminase from Clostridium perfringens (strain SM101 / Type A).